Reading from the N-terminus, the 125-residue chain is Small ribosomal subunit protein uS12 (125 aa).

D89 is modified (3-methylthioaspartic acid).

This sequence belongs to the universal ribosomal protein uS12 family. As to quaternary structure, part of the 30S ribosomal subunit. Contacts proteins S8 and S17. May interact with IF1 in the 30S initiation complex.

Its function is as follows. With S4 and S5 plays an important role in translational accuracy. In terms of biological role, interacts with and stabilizes bases of the 16S rRNA that are involved in tRNA selection in the A site and with the mRNA backbone. Located at the interface of the 30S and 50S subunits, it traverses the body of the 30S subunit contacting proteins on the other side and probably holding the rRNA structure together. The combined cluster of proteins S8, S12 and S17 appears to hold together the shoulder and platform of the 30S subunit. The polypeptide is Small ribosomal subunit protein uS12 (Cupriavidus metallidurans (strain ATCC 43123 / DSM 2839 / NBRC 102507 / CH34) (Ralstonia metallidurans)).